Reading from the N-terminus, the 518-residue chain is Protein nucleotidyltransferase YdiU (518 aa).

Positions M1–P22 are disordered. 8 residues coordinate ATP: G100, G102, R103, K123, D135, G136, R193, and R200. The Proton acceptor role is filled by D270. Mg(2+) is bound by residues N271 and D280. An ATP-binding site is contributed by D280.

The protein belongs to the SELO family. The cofactor is Mg(2+). It depends on Mn(2+) as a cofactor.

The enzyme catalyses L-seryl-[protein] + ATP = 3-O-(5'-adenylyl)-L-seryl-[protein] + diphosphate. The catalysed reaction is L-threonyl-[protein] + ATP = 3-O-(5'-adenylyl)-L-threonyl-[protein] + diphosphate. It catalyses the reaction L-tyrosyl-[protein] + ATP = O-(5'-adenylyl)-L-tyrosyl-[protein] + diphosphate. It carries out the reaction L-histidyl-[protein] + UTP = N(tele)-(5'-uridylyl)-L-histidyl-[protein] + diphosphate. The enzyme catalyses L-seryl-[protein] + UTP = O-(5'-uridylyl)-L-seryl-[protein] + diphosphate. The catalysed reaction is L-tyrosyl-[protein] + UTP = O-(5'-uridylyl)-L-tyrosyl-[protein] + diphosphate. Functionally, nucleotidyltransferase involved in the post-translational modification of proteins. It can catalyze the addition of adenosine monophosphate (AMP) or uridine monophosphate (UMP) to a protein, resulting in modifications known as AMPylation and UMPylation. The chain is Protein nucleotidyltransferase YdiU from Xanthomonas campestris pv. campestris (strain 8004).